Reading from the N-terminus, the 156-residue chain is UPF0587 protein (156 aa).

Zn(2+) is bound by residues cysteine 32, cysteine 35, cysteine 64, and cysteine 67.

This sequence belongs to the UPF0587 family.

The polypeptide is UPF0587 protein (Dictyostelium discoideum (Social amoeba)).